The chain runs to 365 residues: Medium chain reductase pydE (365 aa).

An Enoyl reductase (ER) domain is found at 21 to 362 (KLIDSLPVPP…SKRARGKVLI (342 aa)). Residues 185–188 (SGSV), Tyr-226, 274–275 (IG), and 354–355 (KR) contribute to the NADP(+) site.

This sequence belongs to the zinc-containing alcohol dehydrogenase family. Monomer.

It participates in mycotoxin biosynthesis. Functionally, medium chain reductase; part of the gene cluster that mediates the biosynthesis of pyrrocidines, fungal natural products containing a macrocyclic para-cyclophane connected to a decahydrofluorene ring system that show potent antibiotic activities toward Gram-negative bacteria. Within the pathway, pydE functions synergistically with pydB, pydX and pydZ to form the cyclophane. The pathway begins with the PKS-NRPS pydA which, with the help of the trans-enoyl reductase pydC, synthesizes the polyketide-tyrosyl acyl thioester product which can be reductively off-loaded by the terminal reductase (R) domain in pydA. The alpha/beta hydrolase pydG is then required to catalyze the subsequent Knoevenagel condensation that affords the 3-pyrrolin-2-one ring, whereas the four proteins pydB, pydE, pydX and pydZ then function synergistically to form the cyclophane. PydB and the membrane-bound pydX and pydZ are lipid-binding proteins that can sequester and mold the pdyG product into the inverse S-shape. Binding of the medium chain reductase pydE to the complex would trigger the cascade oxidative cyclization. PydY is involved in the Diels-Alder cycloaddition that forms the decahydrofluorene core. Additional non-enzymatic hydroxylation yields pyrrocidine A2 which can be further reduced into pyrrocidine B by an endogenous reductase. The polypeptide is Medium chain reductase pydE (Acremonium sp).